Consider the following 350-residue polypeptide: Biotin synthase (350 aa).

The Radical SAM core domain occupies 41–268 (NEVQISRLLS…KSRVRLSAGR (228 aa)). The [4Fe-4S] cluster site is built by Cys56, Cys60, and Cys63. [2Fe-2S] cluster is bound by residues Cys100, Cys131, Cys191, and Arg263.

The protein belongs to the radical SAM superfamily. Biotin synthase family. As to quaternary structure, homodimer. [4Fe-4S] cluster is required as a cofactor. [2Fe-2S] cluster serves as cofactor.

The enzyme catalyses (4R,5S)-dethiobiotin + (sulfur carrier)-SH + 2 reduced [2Fe-2S]-[ferredoxin] + 2 S-adenosyl-L-methionine = (sulfur carrier)-H + biotin + 2 5'-deoxyadenosine + 2 L-methionine + 2 oxidized [2Fe-2S]-[ferredoxin]. It functions in the pathway cofactor biosynthesis; biotin biosynthesis; biotin from 7,8-diaminononanoate: step 2/2. In terms of biological role, catalyzes the conversion of dethiobiotin (DTB) to biotin by the insertion of a sulfur atom into dethiobiotin via a radical-based mechanism. This chain is Biotin synthase, found in Shewanella halifaxensis (strain HAW-EB4).